A 251-amino-acid polypeptide reads, in one-letter code: Aliphatic sulfonates import ATP-binding protein SsuB (251 aa).

The ABC transporter domain maps to 3-231 (VSINEVSKYF…PRSKNSESFQ (229 aa)). 39–46 (GPSGCGKS) provides a ligand contact to ATP.

This sequence belongs to the ABC transporter superfamily. Aliphatic sulfonates importer (TC 3.A.1.17.2) family. In terms of assembly, the complex is composed of two ATP-binding proteins (SsuB), two transmembrane proteins (SsuC) and a solute-binding protein (SsuA).

The protein resides in the cell membrane. It catalyses the reaction ATP + H2O + aliphatic sulfonate-[sulfonate-binding protein]Side 1 = ADP + phosphate + aliphatic sulfonateSide 2 + [sulfonate-binding protein]Side 1.. Part of the ABC transporter complex SsuABC involved in aliphatic sulfonates import. Responsible for energy coupling to the transport system. This is Aliphatic sulfonates import ATP-binding protein SsuB from Bacillus cereus (strain ZK / E33L).